The primary structure comprises 151 residues: Arginine repressor (151 aa).

The protein belongs to the ArgR family.

Its subcellular location is the cytoplasm. Its pathway is amino-acid biosynthesis; L-arginine biosynthesis [regulation]. Regulates arginine biosynthesis genes. This is Arginine repressor from Pelotomaculum thermopropionicum (strain DSM 13744 / JCM 10971 / SI).